The chain runs to 1431 residues: 1-phosphatidylinositol 4,5-bisphosphate phosphodiesterase beta egl-8 (1431 aa).

In terms of domain architecture, PI-PLC X-box spans 340-491 (MDMDQPLCHY…LRKKILIKNK (152 aa)). Histidine 355 is a catalytic residue. Ca(2+) is bound by residues asparagine 356, glutamate 385, and aspartate 387. Histidine 403 is a catalytic residue. Glutamate 437 lines the Ca(2+) pocket. The substrate site is built by lysine 489 and lysine 491. Disordered stretches follow at residues 510–601 (KLDE…MVPD) and 632–692 (RRQS…SGPS). A compositionally biased stretch (acidic residues) spans 543 to 556 (EEVDDDTSDDDDDP). Low complexity-rich tracts occupy residues 572-586 (NTTSNNGSNRSARSS), 652-661 (SSSSPATPSI), and 668-692 (ATSSGSTSSITITTTGCSTSSSGPS). A PI-PLC Y-box domain is found at 758 to 874 (LSSLVNYTHP…GYLLKPDFLR (117 aa)). The substrate site is built by serine 787 and arginine 814. The C2 domain occupies 877–1002 (DRTFDPFSES…SLRSDTNQSF (126 aa)). Disordered regions lie at residues 1072–1119 (QPPR…VAVD), 1150–1176 (DLRKKHQKQRDSIQKQQPARRRNSSIA), and 1188–1216 (NNRRSTKKEKGSRRSLTASVSSGCGSASG). The span at 1074–1113 (PRQNGSSADLLANNGQTGSARGDQTSSMASSTIRSPNEQP) shows a compositional bias: polar residues. Residues 1135-1166 (KAFAKLLKRFQKELDDLRKKHQKQRDSIQKQQ) adopt a coiled-coil conformation. Over residues 1150-1162 (DLRKKHQKQRDSI) the composition is skewed to basic and acidic residues. The span at 1191–1200 (RSTKKEKGSR) shows a compositional bias: basic residues. The span at 1204–1216 (TASVSSGCGSASG) shows a compositional bias: low complexity. Coiled-coil stretches lie at residues 1288-1318 (DEEEFELKKVQLKEQFDLLRKLMSEAQKNQM) and 1368-1402 (EKNLKMFVEERKRLAMKAQKHEEQLTKRHLDQLEQ).

Ca(2+) is required as a cofactor. Expressed in most or all neurons with high expression in the head and tail ganglia and low expression in the motor neurons of the ventral cord. Expressed in the intestine (at protein level). In males, expressed in vas deferens, spicule protractor muscles, diagonal muscles and a male-specific neuron.

It localises to the perikaryon. The protein resides in the cell projection. It is found in the axon. The protein localises to the synapse. Its subcellular location is the cell junction. It localises to the adherens junction. The catalysed reaction is a 1,2-diacyl-sn-glycero-3-phospho-(1D-myo-inositol-4,5-bisphosphate) + H2O = 1D-myo-inositol 1,4,5-trisphosphate + a 1,2-diacyl-sn-glycerol + H(+). Mediates the production of the second messenger molecules diacylglycerol (DAG) and inositol 1,4,5-trisphosphate (IP3) which plays an important role in the regulation of intracellular signaling cascades. Required in the nervous system to modulate neuronal activity. Facilitates synaptic transmission at neuromuscular junctions by regulating the release of acetylcholine from the motor neurons and thus affecting locomotion. Plays a role in efficient egg laying and defecation. Involved in axon regeneration after injury. Plays a role in male mating behavior by regulating spicule insertion and sperm transfer. By triggering Ca(2+) transient via IP3-mediated activation of IPR3 receptor itr-1 in ASH sensory neurons, regulates avoidance behavior in response to nose touch. By activating tpa-1 via DAG production, required for the expression of antimicrobial peptide nlp-29 in response to fungal infection. During embryogenesis, may play a role in epidermal morphogenesis together with plc-1. The sequence is that of 1-phosphatidylinositol 4,5-bisphosphate phosphodiesterase beta egl-8 from Caenorhabditis elegans.